Consider the following 311-residue polypeptide: Splicing factor spf30 (311 aa).

The 64-residue stretch at 76–139 folds into the Tudor domain; it reads DFTPGNLVMA…KAMPEEKRQE (64 aa). 2 disordered regions span residues 154-183 and 276-311; these read RSTPVREPTKAISVASMSTSPSNYASRASS and STEDFPGRTNPKNFGNVARSGHREKHIYNYREDEDS. Over residues 168 to 183 the composition is skewed to polar residues; it reads ASMSTSPSNYASRASS. A Phosphoserine modification is found at S173. Over residues 301–311 the composition is skewed to basic and acidic residues; sequence HIYNYREDEDS.

The protein belongs to the SMN family. Associates with spliceosomes.

It is found in the nucleus. In terms of biological role, involved in spliceosome assembly. In Schizosaccharomyces pombe (strain 972 / ATCC 24843) (Fission yeast), this protein is Splicing factor spf30 (spf30).